A 320-amino-acid chain; its full sequence is Cytochrome f (320 aa).

Positions 1 to 36 are cleaved as a signal peptide; it reads MKHTNSKQKLKDIINFCQAIFTLCIICLYQANISNS. Residues tyrosine 37, cysteine 57, cysteine 60, and histidine 61 each contribute to the heme site. The chain crosses the membrane as a helical span at residues 286 to 305; the sequence is LISFIFFSISVLISQLFFVL.

This sequence belongs to the cytochrome f family. The 4 large subunits of the cytochrome b6-f complex are cytochrome b6, subunit IV (17 kDa polypeptide, petD), cytochrome f and the Rieske protein, while the 4 small subunits are PetG, PetL, PetM and PetN. The complex functions as a dimer. Requires heme as cofactor.

The protein localises to the plastid. The protein resides in the chloroplast thylakoid membrane. Component of the cytochrome b6-f complex, which mediates electron transfer between photosystem II (PSII) and photosystem I (PSI), cyclic electron flow around PSI, and state transitions. This chain is Cytochrome f (petA), found in Cyanidium caldarium (Red alga).